Reading from the N-terminus, the 437-residue chain is Phosphomethylpyrimidine synthase (437 aa).

Substrate contacts are provided by residues Asn69, Met98, Tyr127, His163, 185–187 (SRG), 226–229 (DACR), and Glu265. His269 serves as a coordination point for Zn(2+). Tyr292 serves as a coordination point for substrate. His333 lines the Zn(2+) pocket. Residues Cys409, Cys412, and Cys416 each contribute to the [4Fe-4S] cluster site.

Belongs to the ThiC family. It depends on [4Fe-4S] cluster as a cofactor.

The catalysed reaction is 5-amino-1-(5-phospho-beta-D-ribosyl)imidazole + S-adenosyl-L-methionine = 4-amino-2-methyl-5-(phosphooxymethyl)pyrimidine + CO + 5'-deoxyadenosine + formate + L-methionine + 3 H(+). It participates in cofactor biosynthesis; thiamine diphosphate biosynthesis. In terms of biological role, catalyzes the synthesis of the hydroxymethylpyrimidine phosphate (HMP-P) moiety of thiamine from aminoimidazole ribotide (AIR) in a radical S-adenosyl-L-methionine (SAM)-dependent reaction. The polypeptide is Phosphomethylpyrimidine synthase (Clostridium botulinum (strain Loch Maree / Type A3)).